A 356-amino-acid polypeptide reads, in one-letter code: Protein RecA (356 aa).

68 to 75 is an ATP binding site; that stretch reads GPESSGKT.

The protein belongs to the RecA family.

The protein resides in the cytoplasm. In terms of biological role, can catalyze the hydrolysis of ATP in the presence of single-stranded DNA, the ATP-dependent uptake of single-stranded DNA by duplex DNA, and the ATP-dependent hybridization of homologous single-stranded DNAs. It interacts with LexA causing its activation and leading to its autocatalytic cleavage. The sequence is that of Protein RecA from Clostridium botulinum (strain Alaska E43 / Type E3).